We begin with the raw amino-acid sequence, 1064 residues long: Serine/threonine protein kinase KIN1 (1064 aa).

The interval 1 to 113 is disordered; sequence MDDYHVNTAF…SSQGMPKQFH (113 aa). Residues 8–36 show a composition bias toward polar residues; the sequence is TAFSMGRGNQQDDGNSESNSMHTQPSTMA. Positions 74–91 are enriched in basic and acidic residues; that stretch reads AEQKERQVELEGKSRENA. Positions 93–108 are enriched in polar residues; that stretch reads KPNTTSQSRVSSSQGM. The region spanning 120–398 is the Protein kinase domain; that stretch reads WEFVETVGAG…LKQVVEHHWM (279 aa). ATP contacts are provided by residues 126-134 and lysine 149; that span reads VGAGSMGKV. Aspartate 269 serves as the catalytic Proton acceptor. Serine 534 carries the phosphoserine modification. Residues 549 to 621 are disordered; that stretch reads SEPEATLATK…SPTPQGNDYQ (73 aa). The span at 557 to 571 shows a compositional bias: polar residues; it reads TKDTSVPFTPKNSDG. Serine 593 bears the Phosphoserine mark. The segment covering 598–608 has biased composition (basic and acidic residues); the sequence is KSSDNQRREME. Serine 646 is subject to Phosphoserine. Disordered regions lie at residues 652-672, 694-714, 762-797, 823-843, and 958-1016; these read TIEQTSVNSNNSINKPVQKTH, MNEPVKTNDSRGGNKGDFPAL, EGSDDDENHPLPPLNVAKGRKLHPSARAKSVGHARR, LESSDDNKSDSLGNVTSQTND, and HESI…GMTT. Positions 654–670 are enriched in polar residues; it reads EQTSVNSNNSINKPVQK. Serine 764 carries the phosphoserine modification. Residues 779-794 are compositionally biased toward basic residues; the sequence is KGRKLHPSARAKSVGH. Polar residues-rich tracts occupy residues 832 to 843, 963 to 989, and 998 to 1016; these read DSLGNVTSQTND, RQGSNKYSPSSPLTTNSIHQRKTSITE, and GTSLENIHQQGDGSEGMTT. Position 986 is a phosphoserine (serine 986). The KA1 domain maps to 1015–1064; the sequence is TTTEKEPIKFEIHIVKVRIVGLAGVHFKKISGNTWLYKELASSILKELKL.

This sequence belongs to the protein kinase superfamily. CAMK Ser/Thr protein kinase family. NIM1 subfamily. Interacts with SEC9 and SRO7. Autophosphorylated.

The protein resides in the cytoplasm. The protein localises to the cell membrane. It carries out the reaction L-seryl-[protein] + ATP = O-phospho-L-seryl-[protein] + ADP + H(+). The catalysed reaction is L-threonyl-[protein] + ATP = O-phospho-L-threonyl-[protein] + ADP + H(+). Its function is as follows. Serine/threonine protein kinase involved in the regulation of exocytosis. Induces phosphorylation of SEC9 and its release from the plasma membrane to the cytosol. This chain is Serine/threonine protein kinase KIN1 (KIN1), found in Saccharomyces cerevisiae (strain ATCC 204508 / S288c) (Baker's yeast).